The following is a 341-amino-acid chain: L-threonine 3-dehydrogenase (341 aa).

Residue Cys-38 coordinates Zn(2+). Active-site charge relay system residues include Thr-40 and His-43. His-63, Glu-64, Cys-93, Cys-96, Cys-99, and Cys-107 together coordinate Zn(2+). Residues Ile-175, Asp-195, Arg-200, 262–264, and 286–287 contribute to the NAD(+) site; these read LGI and IY.

The protein belongs to the zinc-containing alcohol dehydrogenase family. In terms of assembly, homotetramer. Zn(2+) is required as a cofactor.

The protein resides in the cytoplasm. It carries out the reaction L-threonine + NAD(+) = (2S)-2-amino-3-oxobutanoate + NADH + H(+). The protein operates within amino-acid degradation; L-threonine degradation via oxydo-reductase pathway; glycine from L-threonine: step 1/2. Functionally, catalyzes the NAD(+)-dependent oxidation of L-threonine to 2-amino-3-ketobutyrate. The protein is L-threonine 3-dehydrogenase of Shewanella woodyi (strain ATCC 51908 / MS32).